The chain runs to 534 residues: Protein FAM83D (534 aa).

Disordered stretches follow at residues 320–372 (TPPS…STLG) and 501–534 (GLNRGRKAQQEARQPNTNIDSGIMGTWPKSRGLQ). Positions 329-342 (TKPQAERLTSTPAR) are enriched in polar residues. The segment covering 350 to 362 (RMNKDIEEPDRKS) has biased composition (basic and acidic residues). Positions 511-520 (EARQPNTNID) are enriched in polar residues.

It belongs to the FAM83 family.

The protein localises to the cytoplasm. The protein resides in the cytoskeleton. It is found in the spindle. It localises to the spindle pole. Functionally, may regulate cell proliferation, growth, migration and epithelial to mesenchymal transition. May also be important for proper chromosome congression and alignment during mitosis. In Danio rerio (Zebrafish), this protein is Protein FAM83D.